Reading from the N-terminus, the 395-residue chain is GPI-anchor transamidase (395 aa).

The N-terminal stretch at M1 to A27 is a signal peptide. Over S28 to G368 the chain is Lumenal. Residues D79, I82, E118, and D120 each coordinate Ca(2+). The active-site Proton donor is the H164. C206 serves as the catalytic Nucleophile; acyl-thioester intermediate. Residues C206, S232, and S234 each contribute to the a protein site. The interval D231 to Q236 is autoinhibitory loop. The cysteines at positions 275 and 280 are disulfide-linked. A helical membrane pass occupies residues G369–T385. Topologically, residues Y386–F395 are cytoplasmic.

It belongs to the peptidase C13 family. Heteropentamer. Part of the GPI-anchor transamidase complex, consisting of PIGK, PIGT, PIGS, PIGU and GAA1. Interacts with GPAA1. Interacts with PIGT; this interaction, via a disulfide link, stabilizes the expression of GAA1 and PIGK and links them to PIGS. Post-translationally, the disulfide bond between PIGK/GPI8 and PIGT is important for normal enzyme activity.

It localises to the endoplasmic reticulum membrane. It functions in the pathway glycolipid biosynthesis; glycosylphosphatidylinositol-anchor biosynthesis. In the absence of proproteins substrates, exists in an inactive state with a disrupted catalytic site by an autoinhibitory loop. The binding of proprotein substrates, particularly the CSP region, to GPI-T triggers concerted conformational changes that alleviate the inhibition by the autoinhibitory loop. Meanwhile, proprotein residues near the omega- site induce the formation of a catalytic cleft for catalysis, following which the products are released and GPI-T reverts to the inactive state. Catalytic subunit of the glycosylphosphatidylinositol-anchor (GPI-anchor) transamidase (GPI-T) complex that catalyzes the formation of the linkage between a proprotein and a GPI-anchor and participates in GPI anchored protein biosynthesis. Recognizes diverse proproteins at a C-terminal signal peptide (CSP) region that lacks consensus sequence and replaces it with a GPI-anchor via a transamidation reaction. Transamidation catalysis reaction follows a two-phase mechanism. In the acyl-enzyme phase, the carbonyl group of the proproteins's omega-site undergoes a nucleophilic attack forming an enzyme-substrate thioester bond. Followed by a general acid catalysis that allows CSP releasing, regenerating the carbonyl, and forming the acyl-enzyme intermediate. In the GPI-anchor attachment phase, the amino group of the GPI-anchor's ethanolamine phosphate, the one on third mannose (EtNP3), mediates a nucleophilic attack on the carbonyl of the acyl-enzyme intermediate, replacing the CSP, allowing GPI-anchor attachment to the omega-residue, therefore forming the product and freeing the enzyme. This is GPI-anchor transamidase from Homo sapiens (Human).